A 1059-amino-acid chain; its full sequence is MGTAQVLPGILQKHCCILPDRNTESQCTLCGEPEEEEGGDLAQPGLSFPGPAEEDIDQQYSWSPTQHFNEERYSPAPRNMKGLTGSRNQPQLCAGHTCGLSPPDDCEHPHDHMHHGSDVRQPYLLSPAESCPMDHHRCSPRSSVHSECMMMPVMLGDHVSSSTFPRMHYSSHYDTRDDCAMSHTSTKVNRIPANLLDQFEKQLPLHRDGFHTLQYQRASAATEQRNESPGRIRHLVHSVQKLFTKSHSLEGSSKSNINGTKSDSRVDDHHQSHLSKHSKRSKSKERKPESKHKSGMSSWWSSDDNLDSDSTYRTPSVAHRHHMDHIPHCYPEALQSPFGDLSLKTSKSNNDVKCSACEGLALTPDTRYMKRSSWSTLTVSQAKEAYRKSSLNLDKPLVHPEIKPSLRPCHYLQVPQDDWGAYPTGGKEEEIPCRRMRSGSYIKAMGDEESGESDSSPKTSPTVAIRPEPLLKPIIQRPLGDHQTQSYLQAATEVPVGHSLNPSINYNSPKFRSRNQSYMRAVSTLSQASCVSQMSEAEVNGQFESVCESVFSEVESQAMDALDLPGCFRTRSHSYLRAIQAGYSQDDECIPVMTSSNMTSTIRSTAAVSYTNYKKTPPPVPPRTTSKPLISVTAQSSTESTQDAYQDSRAQRMSPWPQDSRGGLYNSMDSLDSNKAMNLALETAAAQRHAADTQSSSTRSIDKAVLASKAEELLKSRCSSIGVQDSEFPDHQPYPRSDVETATDSDTESRGLREYHSVGVQVEDEKRHGRFKRSNSVTAAVQADLELEGFPGHVSMEDKGLQFGSSFQRHSEPSTPTQYGALRTVRTQGLFSYREDYRTQVDTSTLPPPDPWLEPSLDTVETGRMSPCRRDGSWFLKLLHTETKRMEGWCKEMEREAEENDLLEDILGKIRSAVGSAQLLMSQKFQQFYWLCQQNMDPSAMPRPTSQDLAGYWDMLQLSVEDVSMKFDELHQLKLNDWKIIESPERKEERKIPPPIPKKPPKGKFPITREKSLDLPDRQRQEARRRLMAAKRAASFRQNSATERADSIEIYIPEAQTRL.

Disordered stretches follow at residues 31–54 and 245–311; these read GEPE…PAEE and KSHS…SDST. The span at 245–261 shows a compositional bias: polar residues; sequence KSHSLEGSSKSNINGTK. Residues 262–271 show a composition bias toward basic and acidic residues; it reads SDSRVDDHHQ. The segment covering 272–285 has biased composition (basic residues); it reads SHLSKHSKRSKSKE. Ser302, Ser308, Ser390, and Ser456 each carry phosphoserine. Residues 613-669 form a disordered region; sequence YKKTPPPVPPRTTSKPLISVTAQSSTESTQDAYQDSRAQRMSPWPQDSRGGLYNSMD. Residues 632 to 645 show a composition bias toward polar residues; sequence VTAQSSTESTQDAY. Ser667, Ser670, Ser673, and Ser720 each carry phosphoserine. Residues 723–756 are disordered; the sequence is VQDSEFPDHQPYPRSDVETATDSDTESRGLREYH. Residue Thr743 is modified to Phosphothreonine. A Phosphoserine modification is found at Ser745. The segment covering 747 to 756 has biased composition (basic and acidic residues); that stretch reads TESRGLREYH. Ser776, Ser811, Ser983, and Ser1012 each carry phosphoserine. Positions 985 to 1025 are disordered; that stretch reads ERKEERKIPPPIPKKPPKGKFPITREKSLDLPDRQRQEARR. The segment covering 1007 to 1025 has biased composition (basic and acidic residues); it reads ITREKSLDLPDRQRQEARR.

This sequence belongs to the SAPAP family. In terms of assembly, interacts with DLG4/PSD-95. Expressed in various brain areas.

Its subcellular location is the cell membrane. It localises to the postsynaptic density. It is found in the synapse. May play a role in the molecular organization of synapses and neuronal cell signaling. Could be an adapter protein linking ion channel to the subsynaptic cytoskeleton. May induce enrichment of PSD-95/SAP90 at the plasma membrane. This Mus musculus (Mouse) protein is Disks large-associated protein 2.